We begin with the raw amino-acid sequence, 303 residues long: MSFAQILRGSRAMASPKCLPESNYSTSHLRFPRLQSITSKKNSRARGDWGLKRTLPKIKTRYICVRQQDSLYKQADFQSSAKFVRLVRNWFDAGFVRDPSEVALLQELLKETGLKDTRDINKVFSPSKQSDENDNFRRYGVSGGIQYSNVPLINSRVTPNCESNCSNIRRRLTAHIISSDASTAYYGLGGLILRLPRTVVFNRNRSSPLFSQEQRISYTVYKNGRLRLVPFSGPELETHLAYPSEDSEVESFFNRDIQLVAKRDSSLDAPVSYQRGIMKFFMAPSQTSNNEANSSEKDNLSNS.

S2 is modified (N-acetylserine). The N-terminal 12 residues, S2–M13, are a transit peptide targeting the mitochondrion; not cleaved.

This sequence belongs to the bacterial ribosomal protein bS1 family. As to quaternary structure, component of the mitochondrial small ribosomal subunit (mt-SSU). Mature yeast 74S mitochondrial ribosomes consist of a small (37S) and a large (54S) subunit. The 37S small subunit contains a 15S ribosomal RNA (15S mt-rRNA) and at least 32 different proteins. The 54S large subunit contains a 21S rRNA (21S mt-rRNA) and at least 45 different proteins. This subunit is mutually exclusive with mug178/small ribosomal subunit protein L51-b.

Its subcellular location is the mitochondrion. Its function is as follows. Component of the mitochondrial ribosome (mitoribosome), a dedicated translation machinery responsible for the synthesis of mitochondrial genome-encoded proteins, including at least some of the essential transmembrane subunits of the mitochondrial respiratory chain. The mitoribosomes are attached to the mitochondrial inner membrane and translation products are cotranslationally integrated into the membrane. bS1m functionally interacts with the 5'-UTR of mitochondrial mRNAs. Plays an essential role in mitochondrial translation. The polypeptide is Small ribosomal subunit protein bS1m (mrp51) (Schizosaccharomyces pombe (strain 972 / ATCC 24843) (Fission yeast)).